We begin with the raw amino-acid sequence, 507 residues long: Secreted lipase ARB_01498 (507 aa).

The signal sequence occupies residues 1-21; that stretch reads MFVQLLTYGLVAASTLQGVFA. The active-site Acyl-ester intermediate is serine 196. Residues asparagine 262, asparagine 321, asparagine 358, and asparagine 416 are each glycosylated (N-linked (GlcNAc...) asparagine).

Belongs to the type-B carboxylesterase/lipase family.

Its subcellular location is the secreted. It catalyses the reaction a triacylglycerol + H2O = a diacylglycerol + a fatty acid + H(+). The chain is Secreted lipase ARB_01498 from Arthroderma benhamiae (strain ATCC MYA-4681 / CBS 112371) (Trichophyton mentagrophytes).